Reading from the N-terminus, the 188-residue chain is Transcription antitermination protein NusB (188 aa).

The segment at 154–188 is disordered; sequence RAANPGAVSGSDAPVAPWDDSEELPAEDEAEDSRP. A compositionally biased stretch (acidic residues) spans 172 to 188; sequence DDSEELPAEDEAEDSRP.

Belongs to the NusB family.

Its function is as follows. Involved in transcription antitermination. Required for transcription of ribosomal RNA (rRNA) genes. Binds specifically to the boxA antiterminator sequence of the ribosomal RNA (rrn) operons. The protein is Transcription antitermination protein NusB of Corynebacterium efficiens (strain DSM 44549 / YS-314 / AJ 12310 / JCM 11189 / NBRC 100395).